Consider the following 146-residue polypeptide: Deoxyuridine 5'-triphosphate nucleotidohydrolase (146 aa).

Substrate-binding positions include 66-68, asparagine 79, 83-85, and lysine 93; these read RSG and TID.

It belongs to the dUTPase family. Requires Mg(2+) as cofactor.

It carries out the reaction dUTP + H2O = dUMP + diphosphate + H(+). The protein operates within pyrimidine metabolism; dUMP biosynthesis; dUMP from dCTP (dUTP route): step 2/2. In terms of biological role, this enzyme is involved in nucleotide metabolism: it produces dUMP, the immediate precursor of thymidine nucleotides and it decreases the intracellular concentration of dUTP so that uracil cannot be incorporated into DNA. This Zymomonas mobilis subsp. mobilis (strain ATCC 31821 / ZM4 / CP4) protein is Deoxyuridine 5'-triphosphate nucleotidohydrolase.